The chain runs to 305 residues: tRNA-cytidine(32) 2-sulfurtransferase (305 aa).

The disordered stretch occupies residues 1-20 (MTAVLPLPQPLADPAPRDPR). Positions 59–64 (SGGKDS) match the PP-loop motif motif. [4Fe-4S] cluster-binding residues include cysteine 134, cysteine 137, and cysteine 225. The segment covering 282 to 293 (DAPSDVDPDPSA) has biased composition (low complexity). Residues 282-305 (DAPSDVDPDPSAWLSASHAPHDSD) form a disordered region.

The protein belongs to the TtcA family. As to quaternary structure, homodimer. Requires Mg(2+) as cofactor. The cofactor is [4Fe-4S] cluster.

The protein resides in the cytoplasm. It catalyses the reaction cytidine(32) in tRNA + S-sulfanyl-L-cysteinyl-[cysteine desulfurase] + AH2 + ATP = 2-thiocytidine(32) in tRNA + L-cysteinyl-[cysteine desulfurase] + A + AMP + diphosphate + H(+). It participates in tRNA modification. Its function is as follows. Catalyzes the ATP-dependent 2-thiolation of cytidine in position 32 of tRNA, to form 2-thiocytidine (s(2)C32). The sulfur atoms are provided by the cysteine/cysteine desulfurase (IscS) system. This is tRNA-cytidine(32) 2-sulfurtransferase from Xanthomonas euvesicatoria pv. vesicatoria (strain 85-10) (Xanthomonas campestris pv. vesicatoria).